The following is a 258-amino-acid chain: UPF0246 protein YaaA (258 aa).

The protein belongs to the UPF0246 family.

This is UPF0246 protein YaaA from Shigella flexneri serotype 5b (strain 8401).